Here is a 153-residue protein sequence, read N- to C-terminus: Lipoprotein signal peptidase (153 aa).

The next 3 helical transmembrane spans lie at 11–31 (ILIL…SLFV), 39–59 (DCID…FAFL), and 68–88 (LVLV…CYAI). Residues aspartate 112 and aspartate 129 contribute to the active site. The helical transmembrane segment at 122–142 (FAVFNFADVMIDVAVVWILLL) threads the bilayer.

This sequence belongs to the peptidase A8 family.

It is found in the cell inner membrane. It carries out the reaction Release of signal peptides from bacterial membrane prolipoproteins. Hydrolyzes -Xaa-Yaa-Zaa-|-(S,diacylglyceryl)Cys-, in which Xaa is hydrophobic (preferably Leu), and Yaa (Ala or Ser) and Zaa (Gly or Ala) have small, neutral side chains.. The protein operates within protein modification; lipoprotein biosynthesis (signal peptide cleavage). This protein specifically catalyzes the removal of signal peptides from prolipoproteins. The protein is Lipoprotein signal peptidase of Sulfurimonas denitrificans (strain ATCC 33889 / DSM 1251) (Thiomicrospira denitrificans (strain ATCC 33889 / DSM 1251)).